Reading from the N-terminus, the 273-residue chain is Ribosomal RNA small subunit methyltransferase A (273 aa).

Positions 18, 20, 45, 66, 91, and 113 each coordinate S-adenosyl-L-methionine.

It belongs to the class I-like SAM-binding methyltransferase superfamily. rRNA adenine N(6)-methyltransferase family. RsmA subfamily.

The protein resides in the cytoplasm. The catalysed reaction is adenosine(1518)/adenosine(1519) in 16S rRNA + 4 S-adenosyl-L-methionine = N(6)-dimethyladenosine(1518)/N(6)-dimethyladenosine(1519) in 16S rRNA + 4 S-adenosyl-L-homocysteine + 4 H(+). Functionally, specifically dimethylates two adjacent adenosines (A1518 and A1519) in the loop of a conserved hairpin near the 3'-end of 16S rRNA in the 30S particle. May play a critical role in biogenesis of 30S subunits. The polypeptide is Ribosomal RNA small subunit methyltransferase A (Enterobacter sp. (strain 638)).